Reading from the N-terminus, the 247-residue chain is Ribonuclease PH (247 aa).

Phosphate-binding positions include R87 and G125–R127.

This sequence belongs to the RNase PH family. Homohexameric ring arranged as a trimer of dimers.

The enzyme catalyses tRNA(n+1) + phosphate = tRNA(n) + a ribonucleoside 5'-diphosphate. In terms of biological role, phosphorolytic 3'-5' exoribonuclease that plays an important role in tRNA 3'-end maturation. Removes nucleotide residues following the 3'-CCA terminus of tRNAs; can also add nucleotides to the ends of RNA molecules by using nucleoside diphosphates as substrates, but this may not be physiologically important. Probably plays a role in initiation of 16S rRNA degradation (leading to ribosome degradation) during starvation. The polypeptide is Ribonuclease PH (Trichormus variabilis (strain ATCC 29413 / PCC 7937) (Anabaena variabilis)).